We begin with the raw amino-acid sequence, 294 residues long: MSWIERIFNKSTIIPTRKIDIPKGIWTKCDNCGQLLYKKELERNLEVCPKCDHHMRIAARVRLFSFLDKGSTSELGSEFEPKDVLKFRDSKRYKDRLISAQKITKEKDALIVMQGTLYGMKIVAASFEFAFIGGSMSSVVGARFVHAVNQALKIKCPLVCFTASGGARMQEALMSLMQMARTSAALANLHERCLPYISVLTNPTMGGVSASLAMLGDLNIAEPKALIGFAGPRIIEQTVREKLPLGFQRSEFLLEKGSIDLIIRRPDLRFKVAGLLAKLTQQPIPKVDYRHCVE.

Residues 25 to 294 (IWTKCDNCGQ…PKVDYRHCVE (270 aa)) form the CoA carboxyltransferase N-terminal domain. Cys-29, Cys-32, Cys-48, and Cys-51 together coordinate Zn(2+). The C4-type zinc finger occupies 29-51 (CDNCGQLLYKKELERNLEVCPKC).

This sequence belongs to the AccD/PCCB family. In terms of assembly, acetyl-CoA carboxylase is a heterohexamer composed of biotin carboxyl carrier protein (AccB), biotin carboxylase (AccC) and two subunits each of ACCase subunit alpha (AccA) and ACCase subunit beta (AccD). Zn(2+) is required as a cofactor.

Its subcellular location is the cytoplasm. The enzyme catalyses N(6)-carboxybiotinyl-L-lysyl-[protein] + acetyl-CoA = N(6)-biotinyl-L-lysyl-[protein] + malonyl-CoA. It participates in lipid metabolism; malonyl-CoA biosynthesis; malonyl-CoA from acetyl-CoA: step 1/1. Component of the acetyl coenzyme A carboxylase (ACC) complex. Biotin carboxylase (BC) catalyzes the carboxylation of biotin on its carrier protein (BCCP) and then the CO(2) group is transferred by the transcarboxylase to acetyl-CoA to form malonyl-CoA. This Blochmanniella pennsylvanica (strain BPEN) protein is Acetyl-coenzyme A carboxylase carboxyl transferase subunit beta.